The chain runs to 78 residues: DNA-directed RNA polymerase subunit omega (78 aa).

Belongs to the RNA polymerase subunit omega family. In cyanobacteria the RNAP catalytic core is composed of 2 alpha, 1 beta, 1 beta', 1 gamma and 1 omega subunit. When a sigma factor is associated with the core the holoenzyme is formed, which can initiate transcription.

The enzyme catalyses RNA(n) + a ribonucleoside 5'-triphosphate = RNA(n+1) + diphosphate. Its function is as follows. Promotes RNA polymerase assembly. Latches the N- and C-terminal regions of the beta' subunit thereby facilitating its interaction with the beta and alpha subunits. In Prochlorococcus marinus subsp. pastoris (strain CCMP1986 / NIES-2087 / MED4), this protein is DNA-directed RNA polymerase subunit omega.